The sequence spans 200 residues: Ankyrin repeat-containing protein YAR1 (200 aa).

ANK repeat units lie at residues 49 to 78 (SDSTALHMAAANGHIETVRYILETVSRANS) and 92 to 121 (TGNTALHWASLNGKLDVVKLLCDEYEADPF). S78 carries the phosphoserine modification. Residues 152–173 (VEPEDDEEDTQTEGKNSVQITK) form a disordered region. Over residues 153-162 (EPEDDEEDTQ) the composition is skewed to acidic residues. The segment covering 164-173 (EGKNSVQITK) has biased composition (polar residues).

Functionally, required for normal rate of cell proliferation. In Saccharomyces cerevisiae (strain ATCC 204508 / S288c) (Baker's yeast), this protein is Ankyrin repeat-containing protein YAR1 (YAR1).